The chain runs to 201 residues: Ribonuclease HII (201 aa).

Positions 10-200 constitute an RNase H type-2 domain; that stretch reads LIEAGCDEAG…LGDGQLELFS (191 aa). A divalent metal cation-binding residues include D16, E17, and D108.

The protein belongs to the RNase HII family. It depends on Mn(2+) as a cofactor. Requires Mg(2+) as cofactor.

It is found in the cytoplasm. It catalyses the reaction Endonucleolytic cleavage to 5'-phosphomonoester.. Functionally, endonuclease that specifically degrades the RNA of RNA-DNA hybrids. The chain is Ribonuclease HII from Bacteroides fragilis (strain YCH46).